The sequence spans 808 residues: Protein tortoise (808 aa).

Residues 43 to 78 (KDRKELYSLNNDSIKKKLNQLKDETNQLLKERGEEL) are a coiled coil. The interval 152-171 (LTSGGANKKKSPFLEDNNNK) is disordered. Residues 694-733 (EDLDFQIEELELMIKNKKILEREIKAHNEKISKIIKDSRD) adopt a coiled-coil conformation.

It is found in the mitochondrion. Functionally, required for efficient chemotaxis. In Dictyostelium discoideum (Social amoeba), this protein is Protein tortoise (torA).